A 317-amino-acid polypeptide reads, in one-letter code: L-lactate dehydrogenase 1 (317 aa).

NAD(+)-binding positions include Val-17, Asp-38, Lys-43, Tyr-69, and 83 to 84; that span reads GA. Substrate contacts are provided by Gln-86 and Arg-92. NAD(+) contacts are provided by residues Ser-105, 122-124, and Ser-147; that span reads ATN. 124–127 contributes to the substrate binding site; sequence NPVD. Residue 152–155 coordinates substrate; the sequence is DSAR. Catalysis depends on His-179, which acts as the Proton acceptor. Tyr-223 is modified (phosphotyrosine). A substrate-binding site is contributed by Thr-232.

The protein belongs to the LDH/MDH superfamily. LDH family. Homotetramer.

Its subcellular location is the cytoplasm. The enzyme catalyses (S)-lactate + NAD(+) = pyruvate + NADH + H(+). The protein operates within fermentation; pyruvate fermentation to lactate; (S)-lactate from pyruvate: step 1/1. Catalyzes the conversion of lactate to pyruvate (Potential). Appears to be the primary factor that allows S.aureus growth during nitrosative stress in both aerobically and anaerobically cultured cells. This is L-lactate dehydrogenase 1 from Staphylococcus aureus (strain bovine RF122 / ET3-1).